The sequence spans 156 residues: MTIHIDFLDETNEVTAEQIETIERLLAEAAALENVPDGAEVSVTFVDNERIRAMNRDYRGKDAPTDVLSFALEEEGEEEVHIVGADMPPVLGDIVISIPKAKEQAAAYGHSFMRELGFLAVHGFLHLLGYDHGTEEEERVMFAKQEDILARFGLTR.

Residues histidine 122, histidine 126, and histidine 132 each coordinate Zn(2+).

It belongs to the endoribonuclease YbeY family. The cofactor is Zn(2+).

The protein resides in the cytoplasm. Functionally, single strand-specific metallo-endoribonuclease involved in late-stage 70S ribosome quality control and in maturation of the 3' terminus of the 16S rRNA. The chain is Endoribonuclease YbeY from Geobacillus kaustophilus (strain HTA426).